Here is a 377-residue protein sequence, read N- to C-terminus: Nitric oxide reductase FlRd-NAD(+) reductase (377 aa).

It belongs to the FAD-dependent oxidoreductase family. FAD serves as cofactor.

The protein resides in the cytoplasm. It catalyses the reaction 2 reduced [nitric oxide reductase rubredoxin domain] + NAD(+) + H(+) = 2 oxidized [nitric oxide reductase rubredoxin domain] + NADH. It participates in nitrogen metabolism; nitric oxide reduction. One of at least two accessory proteins for anaerobic nitric oxide (NO) reductase. Reduces the rubredoxin moiety of NO reductase. The sequence is that of Nitric oxide reductase FlRd-NAD(+) reductase from Escherichia coli O127:H6 (strain E2348/69 / EPEC).